We begin with the raw amino-acid sequence, 119 residues long: Large ribosomal subunit protein uL18 (119 aa).

This sequence belongs to the universal ribosomal protein uL18 family. As to quaternary structure, part of the 50S ribosomal subunit; part of the 5S rRNA/L5/L18/L25 subcomplex. Contacts the 5S and 23S rRNAs.

This is one of the proteins that bind and probably mediate the attachment of the 5S RNA into the large ribosomal subunit, where it forms part of the central protuberance. The sequence is that of Large ribosomal subunit protein uL18 from Cupriavidus taiwanensis (strain DSM 17343 / BCRC 17206 / CCUG 44338 / CIP 107171 / LMG 19424 / R1) (Ralstonia taiwanensis (strain LMG 19424)).